Consider the following 85-residue polypeptide: Small ribosomal subunit protein bS16c (85 aa).

This sequence belongs to the bacterial ribosomal protein bS16 family.

It is found in the plastid. Its subcellular location is the chloroplast. The polypeptide is Small ribosomal subunit protein bS16c (Nicotiana tabacum (Common tobacco)).